The following is a 353-amino-acid chain: Iron(III) enterobactin esterase (353 aa).

Belongs to the Fes family.

It localises to the cytoplasm. It carries out the reaction Fe(III)-enterobactin + 3 H2O + H(+) = Fe(III)-[N-(2,3-dihydroxybenzoyl)-L-serine] + 2 N-(2,3-dihydroxybenzoyl)-L-serine. The enzyme catalyses Fe(III)-enterobactin + H2O = Fe(III)-[N-(2,3-dihydroxybenzoyl)-L-serine]3 + H(+). It catalyses the reaction Fe(III)-[N-(2,3-dihydroxybenzoyl)-L-serine]3 + H2O + H(+) = Fe(III)-[N-(2,3-dihydroxybenzoyl)-L-serine]2 + N-(2,3-dihydroxybenzoyl)-L-serine. The catalysed reaction is Fe(III)-[N-(2,3-dihydroxybenzoyl)-L-serine]2 + H2O + H(+) = Fe(III)-[N-(2,3-dihydroxybenzoyl)-L-serine] + N-(2,3-dihydroxybenzoyl)-L-serine. In terms of biological role, catalyzes the hydrolysis of ferric enterobactin (Fe-Ent). Is responsible for the release of iron from ferric enterobactin. The chain is Iron(III) enterobactin esterase from Yersinia enterocolitica.